We begin with the raw amino-acid sequence, 135 residues long: Small ribosomal subunit protein uS12 (135 aa).

3-methylthioaspartic acid is present on Asp-89. The interval 106–135 is disordered; the sequence is GVKDRKQGRSKYGAKRPKPGQAPAAAGKKK. Residues 113–123 show a composition bias toward basic residues; the sequence is GRSKYGAKRPK. Positions 124 to 135 are enriched in low complexity; the sequence is PGQAPAAAGKKK.

It belongs to the universal ribosomal protein uS12 family. In terms of assembly, part of the 30S ribosomal subunit. Contacts proteins S8 and S17. May interact with IF1 in the 30S initiation complex.

In terms of biological role, with S4 and S5 plays an important role in translational accuracy. Its function is as follows. Interacts with and stabilizes bases of the 16S rRNA that are involved in tRNA selection in the A site and with the mRNA backbone. Located at the interface of the 30S and 50S subunits, it traverses the body of the 30S subunit contacting proteins on the other side and probably holding the rRNA structure together. The combined cluster of proteins S8, S12 and S17 appears to hold together the shoulder and platform of the 30S subunit. In Synechococcus sp. (strain JA-3-3Ab) (Cyanobacteria bacterium Yellowstone A-Prime), this protein is Small ribosomal subunit protein uS12.